The primary structure comprises 339 residues: Flap endonuclease 1 (339 aa).

The N-domain stretch occupies residues 1 to 99; sequence MGVNLKEIVD…VAWEKRKKHK (99 aa). Residues aspartate 29, aspartate 81, glutamate 153, glutamate 155, aspartate 174, aspartate 176, and aspartate 237 each coordinate Mg(2+). The tract at residues 117 to 258 is I-domain; the sequence is EAIKYAKSLG…TAIEIVKRFG (142 aa). The interval 329–337 is interaction with PCNA; the sequence is NQKTLFSFF.

This sequence belongs to the XPG/RAD2 endonuclease family. FEN1 subfamily. Interacts with PCNA. PCNA stimulates the nuclease activity without altering cleavage specificity. The cofactor is Mg(2+).

Structure-specific nuclease with 5'-flap endonuclease and 5'-3' exonuclease activities involved in DNA replication and repair. During DNA replication, cleaves the 5'-overhanging flap structure that is generated by displacement synthesis when DNA polymerase encounters the 5'-end of a downstream Okazaki fragment. Binds the unpaired 3'-DNA end and kinks the DNA to facilitate 5' cleavage specificity. Cleaves one nucleotide into the double-stranded DNA from the junction in flap DNA, leaving a nick for ligation. Also involved in the base excision repair (BER) pathway. Acts as a genome stabilization factor that prevents flaps from equilibrating into structures that lead to duplications and deletions. Also possesses 5'-3' exonuclease activity on nicked or gapped double-stranded DNA. This chain is Flap endonuclease 1, found in Nanoarchaeum equitans (strain Kin4-M).